The following is a 257-amino-acid chain: MLERFSKWRQAFTDTEDEEPTSIDPQNIPRHVAIIMDGNGRWAKEKGLPRIAGHREGMKTVNKIVRAANTLNIEILTLYAFSTENWKRPKAEVEFLLKLPERYLKSELPTLIEENVQVRLMGSKDGLPSYTLHAVDEAIEKTKHNTGLILNFALNYGSRFELTSAMQQIAKKVQQGELMPEHITEETISAHLMSNHLRDPDLLIRTSGELRLSNFMLWQIAYSEFLFMDVYWPNFTEHHFYKAVLTYQNRGRRYGGV.

Residue D37 is part of the active site. D37 serves as a coordination point for Mg(2+). Residues G38–R41, W42, R50, H54, and S82–E84 contribute to the substrate site. N85 functions as the Proton acceptor in the catalytic mechanism. Substrate-binding positions include W86, R88, R205, and R211–S213. E224 is a binding site for Mg(2+).

This sequence belongs to the UPP synthase family. In terms of assembly, homodimer. Mg(2+) is required as a cofactor.

Catalyzes the condensation of isopentenyl diphosphate (IPP) with allylic pyrophosphates generating different type of terpenoids. The polypeptide is Isoprenyl transferase (Shouchella clausii (strain KSM-K16) (Alkalihalobacillus clausii)).